The sequence spans 399 residues: Paraneoplastic antigen-like protein 6A (399 aa).

This sequence belongs to the PNMA family. In terms of tissue distribution, expressed in the brain.

The protein is Paraneoplastic antigen-like protein 6A of Homo sapiens (Human).